Reading from the N-terminus, the 137-residue chain is Lysozyme (137 aa).

A signal peptide spans 1–20; sequence MQRLLGSIVILATVFTFCEA. The I-type lysozyme domain maps to 21–135; sequence TISSACLRCI…EKVHQQGCNV (115 aa). 6 disulfides stabilise this stretch: C26/C102, C31/C37, C42/C51, C64/C84, C74/C80, and C98/C116. E34 acts as the Proton donor in catalysis. The active-site Nucleophile is the D45. Residue 57–63 coordinates substrate; the sequence is KENYWED. Substrate-binding positions include Y88 and 109-111; that span reads HNG.

The protein belongs to the glycosyl hydrolase 22 family. Type-I lysozyme subfamily. Expressed in the basophil cells of the oyster digestive gland.

The protein localises to the secreted. It catalyses the reaction Hydrolysis of (1-&gt;4)-beta-linkages between N-acetylmuramic acid and N-acetyl-D-glucosamine residues in a peptidoglycan and between N-acetyl-D-glucosamine residues in chitodextrins.. Its function is as follows. Has bacteriolytic activity. May play a role in digestion and in the host defense mechanisms against invading microbes. This is Lysozyme (lysoz) from Magallana gigas (Pacific oyster).